The following is a 407-amino-acid chain: CCA-adding enzyme (407 aa).

The ATP site is built by glycine 32 and arginine 35. 2 residues coordinate CTP: glycine 32 and arginine 35. Positions 45 and 47 each coordinate Mg(2+). ATP contacts are provided by arginine 116, aspartate 159, arginine 162, arginine 165, and arginine 168. Positions 116, 159, 162, 165, and 168 each coordinate CTP.

The protein belongs to the tRNA nucleotidyltransferase/poly(A) polymerase family. Bacterial CCA-adding enzyme type 3 subfamily. Homodimer. The cofactor is Mg(2+).

The enzyme catalyses a tRNA precursor + 2 CTP + ATP = a tRNA with a 3' CCA end + 3 diphosphate. It carries out the reaction a tRNA with a 3' CCA end + 2 CTP + ATP = a tRNA with a 3' CCACCA end + 3 diphosphate. Functionally, catalyzes the addition and repair of the essential 3'-terminal CCA sequence in tRNAs without using a nucleic acid template. Adds these three nucleotides in the order of C, C, and A to the tRNA nucleotide-73, using CTP and ATP as substrates and producing inorganic pyrophosphate. tRNA 3'-terminal CCA addition is required both for tRNA processing and repair. Also involved in tRNA surveillance by mediating tandem CCA addition to generate a CCACCA at the 3' terminus of unstable tRNAs. While stable tRNAs receive only 3'-terminal CCA, unstable tRNAs are marked with CCACCA and rapidly degraded. This chain is CCA-adding enzyme, found in Lactiplantibacillus plantarum (strain ATCC BAA-793 / NCIMB 8826 / WCFS1) (Lactobacillus plantarum).